We begin with the raw amino-acid sequence, 564 residues long: MFS-type transporter kojT (564 aa).

A glycan (N-linked (GlcNAc...) asparagine) is linked at asparagine 113. The next 12 membrane-spanning stretches (helical) occupy residues 120–140 (WATL…SSID), 159–179 (SLAT…AAPF), 187–207 (PVYI…GLAP), 217–237 (FLAG…MADI), 249–269 (VCCT…AFIG), 278–298 (WTEW…FLFV), 353–373 (IMVA…FGFL), 389–409 (GSVG…FAMV), 437–457 (LWFA…MGWT), 462–482 (ISYW…QGIF), 500–520 (ALVS…IVSI), and 530–550 (WSLT…YIFY).

This sequence belongs to the major facilitator superfamily.

Its subcellular location is the cell membrane. MFS-type transporter; part of the gene cluster that mediates the biosynthesis of 5-hydroxy-2-hydroxymethyl-1,4-pyrone, also know as kojic acid, a by-product in the fermentation process of malting rice that acts as a chelation agent. Involved in the seretion of kojic acid. The chain is MFS-type transporter kojT from Aspergillus flavus (strain ATCC 200026 / FGSC A1120 / IAM 13836 / NRRL 3357 / JCM 12722 / SRRC 167).